We begin with the raw amino-acid sequence, 150 residues long: Large ribosomal subunit protein bL9 (150 aa).

This sequence belongs to the bacterial ribosomal protein bL9 family.

In terms of biological role, binds to the 23S rRNA. This Corynebacterium jeikeium (strain K411) protein is Large ribosomal subunit protein bL9.